The chain runs to 465 residues: Methionine aminopeptidase 2-2 (465 aa).

Residues 1 to 13 show a composition bias toward basic and acidic residues; that stretch reads MGSKTPNDHRRGP. The tract at residues 1–92 is disordered; that stretch reads MGSKTPNDHR…KKKTLLGGLQ (92 aa). Over residues 44-55 the composition is skewed to acidic residues; that stretch reads GETEDGEDEDDD. Residues 71 to 86 are compositionally biased toward basic residues; that stretch reads TKKKNKRKKNKKKKKT. Residue histidine 217 participates in substrate binding. Positions 238, 249, and 318 each coordinate a divalent metal cation. Histidine 326 serves as a coordination point for substrate. Positions 351 and 446 each coordinate a divalent metal cation.

This sequence belongs to the peptidase M24A family. Methionine aminopeptidase eukaryotic type 2 subfamily. The cofactor is Co(2+). It depends on Zn(2+) as a cofactor. Mn(2+) serves as cofactor. Fe(2+) is required as a cofactor.

It is found in the cytoplasm. The enzyme catalyses Release of N-terminal amino acids, preferentially methionine, from peptides and arylamides.. Functionally, cotranslationally removes the N-terminal methionine from nascent proteins. The N-terminal methionine is often cleaved when the second residue in the primary sequence is small and uncharged (Met-Ala-, Cys, Gly, Pro, Ser, Thr, or Val). The protein is Methionine aminopeptidase 2-2 of Blastomyces gilchristii (strain SLH14081) (Blastomyces dermatitidis).